Reading from the N-terminus, the 218-residue chain is Hypoxanthine-guanine phosphoribosyltransferase (218 aa).

Alanine 2 is subject to N-acetylalanine. Lysine 69 contacts GMP. N6-acetyllysine is present on lysine 103. Lysine 115 participates in a covalent cross-link: Glycyl lysine isopeptide (Lys-Gly) (interchain with G-Cter in SUMO1); alternate. A Glycyl lysine isopeptide (Lys-Gly) (interchain with G-Cter in SUMO2); alternate cross-link involves residue lysine 115. Residues 134–142 (EDIIDTGKT), lysine 166, 186–188 (KFV), and aspartate 194 each bind GMP. Aspartate 138 serves as the catalytic Proton acceptor. Threonine 142 carries the post-translational modification Phosphothreonine. Aspartate 194 serves as a coordination point for Mg(2+).

It belongs to the purine/pyrimidine phosphoribosyltransferase family. As to quaternary structure, homotetramer. It depends on Mg(2+) as a cofactor.

It is found in the cytoplasm. The enzyme catalyses IMP + diphosphate = hypoxanthine + 5-phospho-alpha-D-ribose 1-diphosphate. It carries out the reaction GMP + diphosphate = guanine + 5-phospho-alpha-D-ribose 1-diphosphate. It participates in purine metabolism; IMP biosynthesis via salvage pathway; IMP from hypoxanthine: step 1/1. In terms of biological role, converts guanine to guanosine monophosphate, and hypoxanthine to inosine monophosphate. Transfers the 5-phosphoribosyl group from 5-phosphoribosylpyrophosphate onto the purine. Plays a central role in the generation of purine nucleotides through the purine salvage pathway. This is Hypoxanthine-guanine phosphoribosyltransferase (HPRT1) from Bos taurus (Bovine).